A 477-amino-acid chain; its full sequence is Ribulose bisphosphate carboxylase large chain (477 aa).

A propeptide spanning residues 1–2 is cleaved from the precursor; the sequence is MS. At P3 the chain carries N-acetylproline. Residue K14 is modified to N6,N6,N6-trimethyllysine. Substrate-binding residues include N123 and T173. The active-site Proton acceptor is K175. K177 is a substrate binding site. K201, D203, and E204 together coordinate Mg(2+). K201 bears the N6-carboxylysine mark. H294 functions as the Proton acceptor in the catalytic mechanism. Substrate-binding residues include R295, H327, and S379.

Belongs to the RuBisCO large chain family. Type I subfamily. Heterohexadecamer of 8 large chains and 8 small chains; disulfide-linked. The disulfide link is formed within the large subunit homodimers. Requires Mg(2+) as cofactor. The disulfide bond which can form in the large chain dimeric partners within the hexadecamer appears to be associated with oxidative stress and protein turnover.

The protein localises to the plastid. Its subcellular location is the chloroplast. The enzyme catalyses 2 (2R)-3-phosphoglycerate + 2 H(+) = D-ribulose 1,5-bisphosphate + CO2 + H2O. The catalysed reaction is D-ribulose 1,5-bisphosphate + O2 = 2-phosphoglycolate + (2R)-3-phosphoglycerate + 2 H(+). Functionally, ruBisCO catalyzes two reactions: the carboxylation of D-ribulose 1,5-bisphosphate, the primary event in carbon dioxide fixation, as well as the oxidative fragmentation of the pentose substrate in the photorespiration process. Both reactions occur simultaneously and in competition at the same active site. The polypeptide is Ribulose bisphosphate carboxylase large chain (Nicotiana tomentosiformis (Tobacco)).